A 378-amino-acid polypeptide reads, in one-letter code: Chaperone protein DnaJ (378 aa).

Residues 5–69 (EYYDRLGVSK…QKRAAYDQYG (65 aa)) form the J domain. The segment at 134–216 (GVEKEVSYNR…CHGTGHEKQA (83 aa)) adopts a CR-type zinc-finger fold. The Zn(2+) site is built by cysteine 147, cysteine 150, cysteine 164, cysteine 167, cysteine 190, cysteine 193, cysteine 204, and cysteine 207. CXXCXGXG motif repeat units lie at residues 147–154 (CGTCLGSG), 164–171 (CRKCHGSG), 190–197 (CDICHGSG), and 204–211 (CQTCHGTG).

This sequence belongs to the DnaJ family. As to quaternary structure, homodimer. The cofactor is Zn(2+).

It is found in the cytoplasm. Participates actively in the response to hyperosmotic and heat shock by preventing the aggregation of stress-denatured proteins and by disaggregating proteins, also in an autonomous, DnaK-independent fashion. Unfolded proteins bind initially to DnaJ; upon interaction with the DnaJ-bound protein, DnaK hydrolyzes its bound ATP, resulting in the formation of a stable complex. GrpE releases ADP from DnaK; ATP binding to DnaK triggers the release of the substrate protein, thus completing the reaction cycle. Several rounds of ATP-dependent interactions between DnaJ, DnaK and GrpE are required for fully efficient folding. Also involved, together with DnaK and GrpE, in the DNA replication of plasmids through activation of initiation proteins. This Streptococcus pyogenes protein is Chaperone protein DnaJ.